Here is a 3746-residue protein sequence, read N- to C-terminus: N-(5-amino-5-carboxypentanoyl)-L-cysteinyl-D-valine synthase (3746 aa).

Positions 299–711 (EEVVERHEDK…GRADFQIKLR (413 aa)) are adenylation (A) domain 1. One can recognise a Carrier 1 domain in the interval 818-895 (DLRGDTEIAL…RMADLLQNKQ (78 aa)). S855 is modified (O-(pantetheine 4'-phosphoryl)serine). Residues 918-1372 (NIYLANSLQQ…YLSSIQLEQL (455 aa)) are condensation (C) domain 1. Residues 1391–1801 (FENEASQKPD…GRNDFQVKIR (411 aa)) are adenylation (A) domain 2. A Carrier 2 domain is found at 1902–1979 (PPRSEIERSL…AQTHLILNDA (78 aa)). An O-(pantetheine 4'-phosphoryl)serine modification is found at S1939. Residues 1994-2434 (QMIPVSRAQE…SELSAEGINE (441 aa)) form a condensation (C) domain 2 region. The tract at residues 2478–2883 (AFLAAEKIAV…GRGDLQIKMR (406 aa)) is adenylation (A) domain 3. A Carrier 3 domain is found at 2991-3066 (PPRNIIEAKM…ALHDHVFMKD (76 aa)). An O-(pantetheine 4'-phosphoryl)serine modification is found at S3026. Residues 3084-3500 (GEAPLLPIQD…NKILDGRASQ (417 aa)) form an epimerase (E) domain region. A thioesterase (TE) domain region spans residues 3530–3732 (TLFLLPPGEG…FSWVGNPQQV (203 aa)).

It belongs to the NRP synthetase family. The cofactor is pantetheine 4'-phosphate. Requires Mg(2+) as cofactor.

The protein resides in the cytoplasm. The protein localises to the cytosol. It localises to the vacuole membrane. It carries out the reaction L-2-aminoadipate + L-valine + L-cysteine + 3 ATP + H2O = N-[(5S)-5-amino-5-carboxypentanoyl]-L-cysteinyl-D-valine + 3 AMP + 3 diphosphate + 3 H(+). It functions in the pathway antibiotic biosynthesis; penicillin G biosynthesis; penicillin G from L-alpha-aminoadipate and L-cysteine and L-valine: step 1/3. Its function is as follows. Nonribosomal peptide synthetase; part of the gene cluster that mediates the biosynthesis of penicillin, the world's most important antibiotic. The trimodular NRPS acvA produces the tripeptide N-[(5S)-5-amino-5-carboxypentanoyl]-L-cysteinyl-D-valine (LLD-ACV or ACV) via condensation of the 3 residues L-2-aminoadipate, L-cysteine and L-valine. The precursor amino acids for penicillin biosynthesis are withdrawn from the vacuolar amino acid pool by the MFS-type transporter penV. Each of the constituent amino acids of the tripeptide ACV are activated as aminoacyl-adenylates with peptide bonds formed through the participation of amino acid thioester intermediates. The penicillin biosynthesis occurs via 3 enzymatic steps, the first corresponding to the production of the tripeptide N-[(5S)-5-amino-5-carboxypentanoyl]-L-cysteinyl-D-valine (LLD-ACV or ACV) by the NRPS acvA. The tripeptide ACV is then cyclized to isopenicillin N (IPN) by the isopenicillin N synthase ipnA that forms the beta-lactam nucleus. Finally, the alpha-aminoadipyl side chain is exchanged for phenylacetic acid by the isopenicillin N acyltransferase aatA to yield penicillin in the peroxisomal matrix. The sequence is that of N-(5-amino-5-carboxypentanoyl)-L-cysteinyl-D-valine synthase from Penicillium chrysogenum (Penicillium notatum).